The primary structure comprises 417 residues: RH-like protein IIR (417 aa).

11 helical membrane-spanning segments follow: residues 12 to 32, 44 to 64, 77 to 97, 125 to 145, 172 to 192, 203 to 223, 238 to 258, 265 to 285, 287 to 307, 331 to 351, and 358 to 378; these read CLPLCALTLEAALILLFYFFT, LVASYQVGQDLTVMAAIGFGF, VAFSLFMLALGVQWAILLDGF, ISVDAVLGKVNLVQLVVMVLV, IYVFAAYFGLSVAWCLPKPLP, TIPSLSAMLGALFLWMFWPSF, VFNTYYAVAVSVVTAISGSSL, ISMSYMHNAVLAGGVAVGTSC, LIPSPWLAMVLGLVAGLISVG, NFSWLGLLGEIIYIVLVVRHT, and MIGFQVLLRIGEFSLATTIAL.

It belongs to the ammonium transporter (TC 2.A.49) family. Rh subfamily.

The protein localises to the membrane. In terms of biological role, may be part of an oligomeric complex which is likely to have a transport or channel function in the erythrocyte membrane. The chain is RH-like protein IIR from Pan troglodytes (Chimpanzee).